Reading from the N-terminus, the 605-residue chain is MWSSPGRNLESGRFNITPRYTGTLSNGSVSSSDKVALSQLTIFNVTVADEGEYTCSVDGESASFRVDLGDSNSSGSNSGVIAGVLITLLLLIALIIILICVFWVVWRYRRRGKFDLGSCRELSCSSCSCVPLLAALKGVKLPTRHRENLNKNGTRLRLNERNHIADTNTEIYSVVQKPLKKISKSPPPLPPLTLTETELNELMSIDEKEELSPIQEKPTRRNTGLSTYSQSGTIPKLAKLTKLRKFKMKENPIYQSADELELELELQVDNTLYALPSKPNSTRNSASFTDDLASDPIYSVAINPSMFTKRSSTIGNDDDLHPYGPIYARPIKQKMRQPLNVSVDNIREVKQIGVGQFGAVVLAEMTGLSGSERCVPTKRDPSMLNGVALVAVKKLKPDVSEEVRQSFDKEIKFVSQLQHDSIVQLLAVCTHSKHPFIVMEYMENGDLNQFLQKYQMVDDDSALYSNQIPPSTLLYMAVQIASGMVYLSSLNYVHRDLATRNCLVGSNFRIKISDFGMSRNLYERVYYRVRGRAMLPIRWMATESFYGRFSEKSDAWAYGVTVWEIYTLGKKQPYEELDDQDMIQDAIRGTGRRIMGRPRGVAGCV.

The Ig-like C2-type domain maps to 1–67; it reads MWSSPGRNLE…DGESASFRVD (67 aa). The Extracellular portion of the chain corresponds to 1–84; sequence MWSSPGRNLE…GSNSGVIAGV (84 aa). 3 N-linked (GlcNAc...) asparagine glycosylation sites follow: Asn26, Asn44, and Asn72. The helical transmembrane segment at 85 to 105 threads the bilayer; sequence LITLLLLIALIIILICVFWVV. Residues 106–605 are Cytoplasmic-facing; it reads WRYRRRGKFD…GRPRGVAGCV (500 aa). The tract at residues 209-230 is disordered; the sequence is EELSPIQEKPTRRNTGLSTYSQ. The segment covering 221–230 has biased composition (polar residues); it reads RNTGLSTYSQ. The Protein kinase domain occupies 346–605; the sequence is IREVKQIGVG…GRPRGVAGCV (260 aa). Residues 352–360 and Lys393 contribute to the ATP site; that span reads IGVGQFGAV. Asp496 acts as the Proton acceptor in catalysis. Position 527 is a phosphotyrosine; by autocatalysis (Tyr527).

The protein belongs to the protein kinase superfamily. Tyr protein kinase family. Insulin receptor subfamily. Phosphorylated.

The protein localises to the cell membrane. It catalyses the reaction L-tyrosyl-[protein] + ATP = O-phospho-L-tyrosyl-[protein] + ADP + H(+). In Geodia cydonium (Sponge), this protein is Class II receptor tyrosine kinase (TK).